Reading from the N-terminus, the 320-residue chain is Probable serine proteinase inhibitor 1 (320 aa).

This sequence belongs to the serpin family. Poxviruses subfamily.

The sequence is that of Probable serine proteinase inhibitor 1 (SPI-1) from Swinepox virus (strain Kasza) (SWPV).